We begin with the raw amino-acid sequence, 1392 residues long: ABC transporter G family member 42 (1392 aa).

Over residues 1 to 18 (MTMSQTDGVEFASRNTNE) the composition is skewed to polar residues. Residues 1–26 (MTMSQTDGVEFASRNTNENGHDDDDQ) form a disordered region. The ABC transporter 1 domain maps to 139-413 (SKLSRFMCSN…FEDCGFKCPN (275 aa)). 173 to 180 (GPPSCGKT) contacts ATP. Residues 491-703 (DMLKACSRRE…AEIGLTANEF (213 aa)) form the ABC transmembrane type-2 1 domain. Helical transmembrane passes span 509-529 (FVYVFKSGLLIFIGFIAMTVY), 543-563 (YLMGSLFFSLFKLLADGLPEL), 596-616 (IPISFLESFLWTMLTYYVIGY), 627-647 (FLILFALHLSCISMFRAIAAV), 652-672 (VVATTVGSISIVLLSVFGGFI), and 739-759 (FGALIGFTLFFNTVFALALTF). One can recognise an ABC transporter 2 domain in the interval 800 to 1045 (FTFQDVQYII…VIEYFMRIHG (246 aa)). 837-844 (GVSGAGKT) contacts ATP. In terms of domain architecture, ABC transmembrane type-2 2 spans 1117–1331 (EQFKACLWKQ…VLNGLLTSQY (215 aa)). The next 7 membrane-spanning stretches (helical) occupy residues 1136–1156 (YNLTRIIFMSFTCMLCGILFW), 1175–1195 (MFTVVLFSGINNCSTVLFSVA), 1215–1237 (YSLAQVLVEIPYSLFQSIVYVII), 1255–1275 (FYSIFCTLLIFNYFGMLLVVV), 1281–1301 (IAFTLRSSFYAIVNLFAGYVM), 1309–1329 (WWIWMYYLSPTSWVLNGLLTS), and 1364–1384 (LVAVVLIAFPILLASLFAFFI).

It belongs to the ABC transporter superfamily. ABCG family. PDR (TC 3.A.1.205) subfamily. In terms of tissue distribution, confined to shoots.

It is found in the membrane. In terms of biological role, may be a general defense protein. This Arabidopsis thaliana (Mouse-ear cress) protein is ABC transporter G family member 42 (ABCG42).